A 272-amino-acid chain; its full sequence is Zinc finger protein 32 (272 aa).

A compositionally biased stretch (basic and acidic residues) spans 50 to 65 (RREKLEQKSPESKALQ). The tract at residues 50–69 (RREKLEQKSPESKALQEDSP) is disordered. 3 consecutive C2H2-type zinc fingers follow at residues 76-98 (YDCQ…ERIH), 104-126 (FECT…QRIH), and 132-154 (YQCK…ERLH). The Zn(2+) site is built by C78, C81, H94, H98, C106, C109, H122, H126, S140, Q143, G156, Y160, F197, K200, L213, A217, C246, C249, H262, and C266. 2 C2H2-type zinc fingers span residues 160 to 182 (YECA…RRVH) and 188 to 210 (YRCD…IRVH). Residues 216 to 238 (YACSHCRKSFHTRGNCLLHGKVH) form a C2H2-type 6 zinc finger. A CCHC-type zinc finger spans residues 244–266 (YLCGQCGKSFTQRGSLAVHQRSC).

It belongs to the krueppel C2H2-type zinc-finger protein family.

It localises to the nucleus. May be involved in transcriptional regulation. This Mus musculus (Mouse) protein is Zinc finger protein 32 (Znf32).